We begin with the raw amino-acid sequence, 677 residues long: Multicopper oxidase GIP1 (677 aa).

The signal sequence occupies residues 1 to 23 (MLTSPRLILLLLAWVFSALVASA). Plastocyanin-like domains are found at residues 31–150 (ITWE…IRRK) and 179–379 (LVMV…RYKG). Asparagine 76 carries N-linked (GlcNAc...) asparagine glycosylation. Histidine 80, histidine 82, histidine 130, and histidine 132 together coordinate Cu cation. 4 N-linked (GlcNAc...) asparagine glycosylation sites follow: asparagine 228, asparagine 283, asparagine 396, and asparagine 478. The region spanning 469 to 588 (DEGLVIRTKN…AGGMAIAILD (120 aa)) is the Plastocyanin-like 3 domain. Histidine 503 contacts Cu cation. N-linked (GlcNAc...) asparagine glycosylation occurs at asparagine 520. The segment at 629–651 (PLLAVSPSGGPKKDSGETSASDS) is disordered.

The protein belongs to the multicopper oxidase family. As to quaternary structure, might be part of an extracellular enzyme complex composed of GIP1, aurF, aurO and aurS.

Its subcellular location is the secreted. The protein localises to the extracellular space. Its pathway is pigment biosynthesis. Multicopper oxidase; part of the gene cluster that mediates the biosynthesis of aurofusarin, a red mycelium pigment which is acting as a mycotoxin. The first step is performed by the polyketide synthase which condenses one acetyl-CoA and 6 malonyl-CoA units to form the first intermediate, the cyclic heptaketide and yellow pigment YWA1. The C2 hydroxyl group in the pyrone ring of YWA1 is probably formed during ring closure by an aldol-type cyclization reaction. The dehydratase aurZ then acts as the first tailoring enzyme in the aurofusarin biosynthetic pathway by converting YWA1 to nor-rubrofusarin. Nor-rubrofusarin is then methylated to rubrofusarin by the O-methyltransferase aurJ. Rubrofusarin is then transported across the plasma membrane by the rubrofusarin-specific pump aurT for further enzymatic processing by the extracellular complex composed of GIP1, aurF, aurO and aurS to yield aurofusarin. This Gibberella zeae (strain ATCC MYA-4620 / CBS 123657 / FGSC 9075 / NRRL 31084 / PH-1) (Wheat head blight fungus) protein is Multicopper oxidase GIP1.